The chain runs to 401 residues: Beta-lactamase (401 aa).

Residues 1–39 (MKLFTSTLTAKKSSTHKPLISLALSVLISTLLISETAQA) form the signal peptide. S102 serves as the catalytic Acyl-ester intermediate. The active-site Proton acceptor is Y188. 353 to 355 (KTG) contacts substrate.

Belongs to the class-C beta-lactamase family.

The protein localises to the secreted. The enzyme catalyses a beta-lactam + H2O = a substituted beta-amino acid. In terms of biological role, this protein is a serine beta-lactamase with a substrate specificity for cephalosporins. This Psychrobacter immobilis protein is Beta-lactamase (ampC).